The chain runs to 842 residues: MVAFTIEQIRGLMDKVTNVRNMSVIAHVDHGKSTLSDSLVQKAGIISAAKAGDARFMDTRKDEQERGITIKSTAISLYASMTDEDVKDIKQKTDGNSFLVNLIDSPGHVDFSSEVTAALRVTDGALVVVDTVEGVCVQTETVLRQALGERIKPVVVINKVDRALLELQTTKEDLYQTFARTVESVNVIISTYCDPVLGDVQVYPQKGTVAFASGLHGWAFTVRQFANKYSKKFGVDKEKMMERLWGDSYFNPKTKKWTNKDKDADGKPLERAFNMFILDPIFRLFAAIMNFKKDEIPVLLEKLEIQLKGDEKDLEGKALLKVVMRKFLPAADALLEMIVLHLPSPVTAQAYRAETLYEGPSDDPFCTAIRNCDPNADLMLYVSKMVPTSDKGRFYAFGRVFAGTVKSGQKVRIQGPNYQVGKKEDLFLKSIQRTVLMMGRSVEQIDDCPAGNIIGLVGIDQFLLKSGTITTNEAAHNMKVMKFSVSPVVQVAVEVKNANDLPKLVEGLKRLSKSDPCVLTYMSESGEHIVAGTGELHLEICLQDLENDHAGVPLRISPPVVSYRETVEGESSMVALSKSPNKHNRIYVKAQPIDEEVSLDIENGVINPRDDFKARARILADKHGWDVVDARKIWCFGPDGNGPNLVVDQTKAVQYLNEIKDSVVAAFQWATKEGPIFGENCRSVRVNILDVTLHADAIHRGGGQIIPTMRRVTYASMLLAEPAIQEPVFLVEIQCPENAIGGIYSVLNKKRGQVISEEQRPGTPLFTVKAYLPVNESFGFTGELRQATGGQAFPQLIFDHWQVMSGDVTDENSKPGAIVKEKRVRAGLKPEVPEYTEYYDKL.

The tr-type G domain maps to 17–346 (TNVRNMSVIA…MIVLHLPSPV (330 aa)). GTP is bound by residues 26–33 (AHVDHGKS), 158–161 (NKVD), and 213–215 (SGL). The residue at position 699 (histidine 699) is a Diphthamide.

It belongs to the TRAFAC class translation factor GTPase superfamily. Classic translation factor GTPase family. EF-G/EF-2 subfamily.

The protein localises to the cytoplasm. The catalysed reaction is GTP + H2O = GDP + phosphate + H(+). Catalyzes the GTP-dependent ribosomal translocation step during translation elongation. During this step, the ribosome changes from the pre-translocational (PRE) to the post-translocational (POST) state as the newly formed A-site-bound peptidyl-tRNA and P-site-bound deacylated tRNA move to the P and E sites, respectively. Catalyzes the coordinated movement of the two tRNA molecules, the mRNA and conformational changes in the ribosome. This chain is Elongation factor 2 (EFT2), found in Candida albicans (strain SC5314 / ATCC MYA-2876) (Yeast).